Reading from the N-terminus, the 354-residue chain is DNA integrity scanning protein DisA (354 aa).

Residues 6 to 144 (DDELKKILKI…GDIKYVLRDS (139 aa)) form the DAC domain. ATP is bound by residues Gly-73, Leu-91, and 104 to 108 (TRHRT).

The protein belongs to the DisA family. Homooctamer. Mg(2+) is required as a cofactor.

The enzyme catalyses 2 ATP = 3',3'-c-di-AMP + 2 diphosphate. Its function is as follows. Participates in a DNA-damage check-point that is active prior to asymmetric division when DNA is damaged. DisA forms globular foci that rapidly scan along the chromosomes during sporulation, searching for lesions. When a lesion is present, DisA pauses at the lesion site. This triggers a cellular response that culminates in a temporary block in sporulation initiation. Functionally, also has diadenylate cyclase activity, catalyzing the condensation of 2 ATP molecules into cyclic di-AMP (c-di-AMP). c-di-AMP acts as a signaling molecule that couples DNA integrity with progression of sporulation. The rise in c-di-AMP level generated by DisA while scanning the chromosome, operates as a positive signal that advances sporulation; upon encountering a lesion, the DisA focus arrests at the damaged site and halts c-di-AMP synthesis. The chain is DNA integrity scanning protein DisA from Clostridium perfringens (strain SM101 / Type A).